The following is a 238-amino-acid chain: Purine nucleoside phosphorylase DeoD-type (238 aa).

Histidine 4 is an a purine D-ribonucleoside binding site. Phosphate contacts are provided by residues glycine 20, arginine 24, arginine 43, and 87-90; that span reads RIGS. Residues 181 to 183 and 205 to 206 contribute to the a purine D-ribonucleoside site; these read EME and SD. The Proton donor role is filled by aspartate 206.

The protein belongs to the PNP/UDP phosphorylase family. As to quaternary structure, homohexamer; trimer of homodimers.

It catalyses the reaction a purine D-ribonucleoside + phosphate = a purine nucleobase + alpha-D-ribose 1-phosphate. The catalysed reaction is a purine 2'-deoxy-D-ribonucleoside + phosphate = a purine nucleobase + 2-deoxy-alpha-D-ribose 1-phosphate. Functionally, catalyzes the reversible phosphorolytic breakdown of the N-glycosidic bond in the beta-(deoxy)ribonucleoside molecules, with the formation of the corresponding free purine bases and pentose-1-phosphate. The polypeptide is Purine nucleoside phosphorylase DeoD-type (Mycoplasma pneumoniae (strain ATCC 29342 / M129 / Subtype 1) (Mycoplasmoides pneumoniae)).